The sequence spans 165 residues: Regulator of ribonuclease activity A (165 aa).

Belongs to the RraA family. In terms of assembly, homotrimer. Binds to both RNA-binding sites in the C-terminal region of Rne and to RhlB.

Its subcellular location is the cytoplasm. Globally modulates RNA abundance by binding to RNase E (Rne) and regulating its endonucleolytic activity. Can modulate Rne action in a substrate-dependent manner by altering the composition of the degradosome. Modulates RNA-binding and helicase activities of the degradosome. In Actinobacillus pleuropneumoniae serotype 5b (strain L20), this protein is Regulator of ribonuclease activity A.